Reading from the N-terminus, the 231-residue chain is Octanoyl-[acyl-carrier-protein]:protein N-octanoyltransferase LIPT2, mitochondrial (231 aa).

The BPL/LPL catalytic domain maps to 41–224; it reads GTKAGVLLVC…AFKETFKCTL (184 aa). Lysine 43 is subject to N6-succinyllysine. Residues 85–92, 154–156, and 167–169 contribute to the substrate site; these read RGGLATFH, AIG, and GLA. The Acyl-thioester intermediate role is filled by cysteine 185.

It belongs to the LipB family.

It is found in the mitochondrion. The enzyme catalyses octanoyl-[ACP] + L-lysyl-[protein] = N(6)-octanoyl-L-lysyl-[protein] + holo-[ACP] + H(+). It participates in protein modification; protein lipoylation via endogenous pathway; protein N(6)-(lipoyl)lysine from octanoyl-[acyl-carrier-protein]: step 1/2. Its function is as follows. Catalyzes the transfer of endogenously produced octanoic acid from octanoyl-acyl-carrier-protein onto the lipoyl domains of lipoate-dependent enzymes such as the protein H of the glycine cleavage system (GCSH). Lipoyl-ACP can also act as a substrate although octanoyl-ACP is likely to be the physiological substrate. The chain is Octanoyl-[acyl-carrier-protein]:protein N-octanoyltransferase LIPT2, mitochondrial from Mus musculus (Mouse).